Reading from the N-terminus, the 158-residue chain is uncharacterized protein (158 aa).

A disordered region spans residues 77–132 (AIKRNKIGGSKRSEVHSNRSKNYSSKKFRSQKCRRSRQKKRQNKKPNNSRFISSNK). Positions 100 to 120 (SSKKFRSQKCRRSRQKKRQNK) are enriched in basic residues.

This is an uncharacterized protein from Acanthamoeba polyphaga mimivirus (APMV).